The chain runs to 397 residues: Acetyl-CoA acetyltransferase, cytosolic (397 aa).

Methionine 1 is modified (N-acetylmethionine). Cysteine 92 functions as the Acyl-thioester intermediate in the catalytic mechanism. Position 200 is an N6-acetyllysine (lysine 200). CoA contacts are provided by arginine 223 and serine 226. N6-acetyllysine occurs at positions 233 and 235. Residue serine 252 participates in CoA binding. Cysteine 383 acts as the Proton donor/acceptor in catalysis.

The protein belongs to the thiolase-like superfamily. Thiolase family. As to quaternary structure, homotetramer.

It is found in the cytoplasm. The protein resides in the cytosol. The enzyme catalyses 2 acetyl-CoA = acetoacetyl-CoA + CoA. Its pathway is lipid metabolism; fatty acid metabolism. Its function is as follows. Involved in the biosynthetic pathway of cholesterol. The protein is Acetyl-CoA acetyltransferase, cytosolic (Acat2) of Mus musculus (Mouse).